Here is a 126-residue protein sequence, read N- to C-terminus: NADP-reducing hydrogenase subunit HndB (126 aa).

Heterotetramer composed of HndA, HndB, HndC and HndD subunits. HndA and HndB could form a heterodimeric intermediate in the electron transfer between the active site of hydrogenase subunit HndD and the NADP reduction site of the reducing subunit HndC.

It catalyses the reaction H2 + NADP(+) = NADPH + H(+). With respect to regulation, inhibited by oxygen. Catalyzes the reduction of NADP in the presence of molecular H2 to yield NADPH. This is NADP-reducing hydrogenase subunit HndB (hndB) from Solidesulfovibrio fructosivorans (Desulfovibrio fructosivorans).